The chain runs to 193 residues: Ribosome maturation factor RimM (193 aa).

In terms of domain architecture, PRC barrel spans 97–172 (DDEFYLTDLV…LILADPPALV (76 aa)). The tract at residues 168–193 (PPALVGDHEGPEEKGLDENEELGDRD) is disordered. Residues 173-193 (GDHEGPEEKGLDENEELGDRD) show a composition bias toward basic and acidic residues.

It belongs to the RimM family. In terms of assembly, binds ribosomal protein uS19.

It localises to the cytoplasm. An accessory protein needed during the final step in the assembly of 30S ribosomal subunit, possibly for assembly of the head region. Essential for efficient processing of 16S rRNA. May be needed both before and after RbfA during the maturation of 16S rRNA. It has affinity for free ribosomal 30S subunits but not for 70S ribosomes. The chain is Ribosome maturation factor RimM from Caulobacter vibrioides (strain ATCC 19089 / CIP 103742 / CB 15) (Caulobacter crescentus).